We begin with the raw amino-acid sequence, 730 residues long: Ribosomal RNA large subunit methyltransferase K/L (730 aa).

Residues 46–157 enclose the THUMP domain; the sequence is TAYRLCVWSR…RGEAILSLDL (112 aa). Residues 395-418 form a disordered region; that stretch reads ERREAQPEGTEVRQQAPQASEPAR.

It belongs to the methyltransferase superfamily. RlmKL family.

It localises to the cytoplasm. It carries out the reaction guanosine(2445) in 23S rRNA + S-adenosyl-L-methionine = N(2)-methylguanosine(2445) in 23S rRNA + S-adenosyl-L-homocysteine + H(+). It catalyses the reaction guanosine(2069) in 23S rRNA + S-adenosyl-L-methionine = N(2)-methylguanosine(2069) in 23S rRNA + S-adenosyl-L-homocysteine + H(+). Functionally, specifically methylates the guanine in position 2445 (m2G2445) and the guanine in position 2069 (m7G2069) of 23S rRNA. The protein is Ribosomal RNA large subunit methyltransferase K/L of Pseudomonas putida (strain GB-1).